The sequence spans 190 residues: Elongation factor P 2 (190 aa).

This sequence belongs to the elongation factor P family.

The protein localises to the cytoplasm. The protein operates within protein biosynthesis; polypeptide chain elongation. Functionally, involved in peptide bond synthesis. Stimulates efficient translation and peptide-bond synthesis on native or reconstituted 70S ribosomes in vitro. Probably functions indirectly by altering the affinity of the ribosome for aminoacyl-tRNA, thus increasing their reactivity as acceptors for peptidyl transferase. In Protochlamydia amoebophila (strain UWE25), this protein is Elongation factor P 2 (efp2).